The primary structure comprises 337 residues: 5-formaminoimidazole-4-carboxamide-1-(beta)-D-ribofuranosyl 5'-monophosphate synthetase (337 aa).

2 residues coordinate 5-amino-1-(5-phospho-beta-D-ribosyl)imidazole-4-carboxamide: histidine 9 and serine 73. The region spanning 94–324 is the ATP-grasp domain; the sequence is KKIFEWEADQ…IGRRIAREIR (231 aa). ATP is bound by residues 124-184 and glutamate 206; that span reads PEDV…VPMY. Asparagine 234 provides a ligand contact to 5-amino-1-(5-phospho-beta-D-ribosyl)imidazole-4-carboxamide. Mg(2+)-binding residues include glutamate 273 and glutamate 286.

It belongs to the phosphohexose mutase family. The cofactor is Mg(2+). Requires Mn(2+) as cofactor.

It catalyses the reaction 5-amino-1-(5-phospho-beta-D-ribosyl)imidazole-4-carboxamide + formate + ATP = 5-formamido-1-(5-phospho-D-ribosyl)imidazole-4-carboxamide + ADP + phosphate. It functions in the pathway purine metabolism; IMP biosynthesis via de novo pathway; 5-formamido-1-(5-phospho-D-ribosyl)imidazole-4-carboxamide from 5-amino-1-(5-phospho-D-ribosyl)imidazole-4-carboxamide (formate route): step 1/1. In terms of biological role, catalyzes the ATP- and formate-dependent formylation of 5-aminoimidazole-4-carboxamide-1-beta-d-ribofuranosyl 5'-monophosphate (AICAR) to 5-formaminoimidazole-4-carboxamide-1-beta-d-ribofuranosyl 5'-monophosphate (FAICAR) in the absence of folates. This Saccharolobus solfataricus (strain ATCC 35092 / DSM 1617 / JCM 11322 / P2) (Sulfolobus solfataricus) protein is 5-formaminoimidazole-4-carboxamide-1-(beta)-D-ribofuranosyl 5'-monophosphate synthetase.